The primary structure comprises 553 residues: MSIIDQVKQTLIEEIEVSIRKANLAEDIPEIKIEIPKDPKNGDYSSNIAMVLTKIAKRNPREIAQAIVDHLDTSKAHVKQVDIAGPGFINFYLDNQYLTAIIPEAITKGDRFGYATQSKNTNILLEYVSANPTGDLHIGHARNASVGDSLANILIAAGYNVTREYYINDAGNQITNLARSIEARYFEALGDTSYEMPADGYNGKDIIEIGKDLAVKHPEIKDYTDEERLKTFRQLGVDYEMEKLKKDLSDFNVHFDNWFSETSLYENGAIENTLSKMKELGYTYEADGATWLRTSDFKDDKDRVLIKKDGNYTYFTPDTAYHYNKINRGNDILIDLMGADHHGYINRLKASLETFGVDSDRLEIQIMQMVRLMQNGEEVKMSKRTGNAITLREIMDEVGIDAARYFLTMRSPDSHFDFDLELAKEQSQDNPIYYAQYAHARICSILKQAKEQGIEVSTDADFSKINNDKAIDLLKKVAEFESTIESAAEHRAPHRLTNYIQDLAAAFHKFYNAEKVLTDDTEKTKAYVAMIEAVRITLHNALALVGVTAPESM.

The 'HIGH' region motif lies at 130–140 (ANPTGDLHIGH).

The protein belongs to the class-I aminoacyl-tRNA synthetase family. In terms of assembly, monomer.

Its subcellular location is the cytoplasm. The catalysed reaction is tRNA(Arg) + L-arginine + ATP = L-arginyl-tRNA(Arg) + AMP + diphosphate. This is Arginine--tRNA ligase from Staphylococcus epidermidis (strain ATCC 35984 / DSM 28319 / BCRC 17069 / CCUG 31568 / BM 3577 / RP62A).